A 667-amino-acid chain; its full sequence is Zeaxanthin epoxidase, chloroplastic (667 aa).

A chloroplast-targeting transit peptide spans 1 to 59 (MGSTPFCYSINPSPSKLDFTRTHVFSPVSKQFYLDLSSFSGKPGGVSGFRSRRALLGVK). FAD-binding positions include 82–110 (RVLV…LVFE) and 360–373 (GFTW…LLGD). The FHA domain maps to 558-612 (CIVGSEPDQDFPGMRIVIPSSQVSKMHARVIYKDGAFFLMDLRSEHGTYVTDNEG).

It depends on FAD as a cofactor. In terms of tissue distribution, expressed in leaves, stems and flowers, and at lower levels in roots and siliques.

The protein localises to the plastid. The protein resides in the chloroplast. The enzyme catalyses all-trans-zeaxanthin + 4 reduced [2Fe-2S]-[ferredoxin] + 2 O2 + 4 H(+) = all-trans-violaxanthin + 4 oxidized [2Fe-2S]-[ferredoxin] + 2 H2O. It functions in the pathway plant hormone biosynthesis; abscisate biosynthesis. Zeaxanthin epoxidase that plays an important role in the xanthophyll cycle and abscisic acid (ABA) biosynthesis. Converts zeaxanthin into antheraxanthin and subsequently violaxanthin. Required for resistance to osmotic and drought stresses, ABA-dependent stomatal closure, seed development and dormancy, modulation of defense gene expression and disease resistance and non-photochemical quencing (NPQ). Through its role in ABA biosynthesis, regulates the expression of stress-responsive genes such as RD29A during osmotic stress and is required for normal plant growth during vegetative development. Is required for late skotomorphogenic growth through its role in the xanthophyll carotenoids neoxanthin, violaxanthin and antheraxanthin biosynthesis. Required for beta-aminobutyric acid (BABA)-induced priming in disease resistance, tolerance to salt and drought stresses and sterility. Participates in NPQ by regulating the level of zeaxanthin in photosynthetic energy conversion. NPQ is a process that maintains the balance between dissipation and utilization of light energy to minimize the generation of oxidizing molecules and the molecular damages they can generate. The chain is Zeaxanthin epoxidase, chloroplastic (ZEP) from Arabidopsis thaliana (Mouse-ear cress).